Consider the following 907-residue polypeptide: Chloride channel protein 2 (907 aa).

Over 1–93 (MAAATAAAAT…RCHKFLVSRV (93 aa)) the chain is Cytoplasmic. The tract at residues 22–40 (QYEQTLMYGRYTQELGAFA) is essential for channel gating by both voltage and cell volume. A Phosphothreonine modification is found at Thr26. Residues 42–55 (EEAARIRLGGPEPW) are modulates channel gating by both voltage and cell volume. 2 helical membrane-spanning segments follow: residues 94–127 (GEDWIFLVLLGLLMALVSWAMDYAIAVCLQAQQW) and 136–161 (ILLQYLAWVTYPVVLITFSAGFTQIL). The Selectivity filter part_1 motif lies at 167–171 (GSGIP). The segment at residues 170-177 (IPEMKTIL) is an intramembrane region (helical). A run of 2 helical transmembrane segments spans residues 186–204 (LTLKTFVAKVIGLTCALGS) and 211–229 (EGPFVHIASMCAALLSKFL). A Selectivity filter part_2 motif is present at residues 209–213 (GKEGP). 2 consecutive intramembrane regions (helical) follow at residues 245–257 (MLAAACAVGVGCC) and 261–269 (PIGGVLFSI). Helical transmembrane passes span 281–301 (YWRGFFAATFSAFIFRVLAVW), 327–355 (LPAFAVIGIASGFGGALFVYLNRKIVQVM), 364–383 (FLMKKRLLFPALVTLLISTL), 435–455 (ANVFLTLVIFILMKFWMSALA), and 463–486 (GAFMPVFVIGAAFGRLVGESMAAW). The Selectivity filter part_3 signature appears at 463–467 (GAFMP). Residues 503-517 (GGYAVVGAAALAGAV) constitute an intramembrane region (helical). The note=Loop between two helices intramembrane region spans 518–519 (TH). Positions 520 to 531 (TVSTAVIVFELT) form an intramembrane region, helical. The note=Loop between two helices intramembrane region spans 532-536 (GQIAH). The helical transmembrane segment at 537–554 (ILPVMIAVILANAVAQSL) threads the bilayer. The Cytoplasmic portion of the chain corresponds to 555–907 (QPSLYDSIIR…TPSDSDDKCQ (353 aa)). One can recognise a CBS 1 domain in the interval 590–648 (MVRDVPHVALSCTFRDLRLALHRTKGRMLALVESPESMILLGSIERSQVVALLGAQLSP). Residues 650–660 (RRRQHMQKLRK) show a composition bias toward basic residues. The segment at 650-720 (RRRQHMQKLR…NATSLQEGTT (71 aa)) is disordered. The segment covering 664-678 (SPPSDQESPPSSETS) has biased composition (low complexity). Over residues 696 to 705 (QTHKPLKPAL) the composition is skewed to basic residues. Positions 710–720 (SNATSLQEGTT) are enriched in polar residues. Ser767 carries the phosphoserine modification. In terms of domain architecture, CBS 2 spans 799-859 (IDPAPFQLVE…GSVTAQGVKV (61 aa)). The Basolateral membrane sorting motif lies at 821-822 (LL). The segment at 865-907 (SFRDSATSSSDTETTEVHALWGPRSRHGLPREGTPSDSDDKCQ) is disordered.

The protein belongs to the chloride channel (TC 2.A.49) family. ClC-2/CLCN2 subfamily. In terms of assembly, homodimer. Interacts with auxiliary subunit HEPACAM. Phosphorylated. Activated by dephosphorylation. As to expression, ubiquitously expressed. Expressed in neurons and glial cells (at protein level).

Its subcellular location is the cell membrane. The protein resides in the basolateral cell membrane. The protein localises to the cell projection. It is found in the dendritic spine membrane. It localises to the axon. The enzyme catalyses chloride(in) = chloride(out). It carries out the reaction thiocyanate(in) = thiocyanate(out). It catalyses the reaction bromide(in) = bromide(out). The catalysed reaction is nitrate(in) = nitrate(out). The enzyme catalyses iodide(out) = iodide(in). Its activity is regulated as follows. Common gate kinetics are down-regulated by intracellular ATP. Inhibited by AK-42, a derivative of meclofenamate. Inhibited by Cd(2+). Inhibited by Zn(2+) and PKC activation. Inhibited at acidic pH. CCLN2:HEPACAM channel conductance is up-regulated upon hypo-osmolarity. Voltage-gated and osmosensitive chloride channel. Forms a homodimeric channel where each subunit has its own ion conduction pathway. Conducts double-barreled currents controlled by two types of gates, two fast glutamate gates that control each subunit independently and a slow common gate that opens and shuts off both subunits simultaneously. Displays inward rectification currents activated upon membrane hyperpolarization and extracellular hypotonicity. Contributes to chloride conductance involved in neuron excitability. In hippocampal neurons, generates a significant part of resting membrane conductance and provides an additional chloride efflux pathway to prevent chloride accumulation in dendrites upon GABA receptor activation. In glia, associates with the auxiliary subunit HEPACAM/GlialCAM at astrocytic processes and myelinated fiber tracts where it may regulate transcellular chloride flux buffering extracellular chloride and potassium concentrations. Regulates aldosterone production in adrenal glands. The opening of CLCN2 channels at hyperpolarized membrane potentials in the glomerulosa causes cell membrane depolarization, activation of voltage-gated calcium channels and increased expression of aldosterone synthase, the rate-limiting enzyme for aldosterone biosynthesis. Contributes to chloride conductance in retinal pigment epithelium involved in phagocytosis of shed photoreceptor outer segments and photoreceptor renewal. Conducts chloride currents at the basolateral membrane of epithelial cells with a role in chloride reabsorption rather than secretion. Permeable to small monovalent anions with chloride &gt; thiocyanate &gt; bromide &gt; nitrate &gt; iodide ion selectivity. The polypeptide is Chloride channel protein 2 (Clcn2) (Rattus norvegicus (Rat)).